A 78-amino-acid chain; its full sequence is Hainantoxin-XX (78 aa).

The N-terminal stretch at 1–23 (MKSATLLALSFLLIALYFLICEA) is a signal peptide. A propeptide spanning residues 24–47 (EHSRYEEHEILEENMGDVVNLEQR) is cleaved from the precursor. 3 cysteine pairs are disulfide-bonded: Cys49–Cys62, Cys56–Cys66, and Cys61–Cys77.

This sequence belongs to the hainantoxin family. 20 subfamily. Expressed by the venom gland.

It is found in the secreted. Putative ion channel inhibitor. The chain is Hainantoxin-XX from Cyriopagopus hainanus (Chinese bird spider).